A 502-amino-acid polypeptide reads, in one-letter code: Maturase K (502 aa).

The protein belongs to the intron maturase 2 family. MatK subfamily.

It localises to the plastid. It is found in the chloroplast. Usually encoded in the trnK tRNA gene intron. Probably assists in splicing its own and other chloroplast group II introns. The protein is Maturase K of Vaccinium vitis-idaea (Mountain cranberry).